A 293-amino-acid polypeptide reads, in one-letter code: IIESVGEGVTDVAPGDHVLPVFTGECKECAHCKSAESNMCDLLRINTDRGVMIGDGKSRFSINGKPIYHFVGTSTFSEYTVMHVGCVAKINPQAPLDKVCVLSCGISTGLGASINVAKPPKGSTVAVFGLGAVGLAAAEGARIAGASRIIGVDLNPSRFEEARKFGCTEFVNPKDHNKPVQEVLAEMTNGGVDRSVECTGNINAMIQAFECVHDGWGVAVLVGVPHKDAEFKTHPMNFLNERTLKGTFFGNYKPRTDLPNVVELYMKKELEVEKFITHSVPFAEINKAFDLMA.

The Zn(2+) site is built by cysteine 26, cysteine 29, cysteine 32, cysteine 40, and cysteine 104. Residues 129-134 (GLGAVG), aspartate 153, arginine 158, threonine 199, valine 222, 222-224 (VGV), and phenylalanine 249 contribute to the NAD(+) site.

This sequence belongs to the zinc-containing alcohol dehydrogenase family. Homodimer. It depends on Zn(2+) as a cofactor.

The protein localises to the cytoplasm. The enzyme catalyses a primary alcohol + NAD(+) = an aldehyde + NADH + H(+). It catalyses the reaction a secondary alcohol + NAD(+) = a ketone + NADH + H(+). The protein is Alcohol dehydrogenase 1 (ADH1) of Zea luxurians (Guatemalan teosinte).